The following is a 319-amino-acid chain: Cobalamin biosynthesis protein CbiB (319 aa).

5 helical membrane-spanning segments follow: residues 56-76 (VMWV…LALA), 82-102 (WFGW…RSLA), 153-173 (VDGI…LAMA), 204-224 (VANY…AGLC), and 296-316 (LMWV…CGLS).

The protein belongs to the CobD/CbiB family.

Its subcellular location is the cell membrane. It participates in cofactor biosynthesis; adenosylcobalamin biosynthesis. In terms of biological role, converts cobyric acid to cobinamide by the addition of aminopropanol on the F carboxylic group. However, the true cosubstrate could be (R)-1-amino-2-propanol O-2-phosphate, leading to cobinamide phosphate. This Salmonella paratyphi B (strain ATCC BAA-1250 / SPB7) protein is Cobalamin biosynthesis protein CbiB.